The sequence spans 238 residues: Ribonuclease PH (238 aa).

Phosphate contacts are provided by residues Arg86 and 124–126; that span reads GTR.

This sequence belongs to the RNase PH family. In terms of assembly, homohexameric ring arranged as a trimer of dimers.

The enzyme catalyses tRNA(n+1) + phosphate = tRNA(n) + a ribonucleoside 5'-diphosphate. Functionally, phosphorolytic 3'-5' exoribonuclease that plays an important role in tRNA 3'-end maturation. Removes nucleotide residues following the 3'-CCA terminus of tRNAs; can also add nucleotides to the ends of RNA molecules by using nucleoside diphosphates as substrates, but this may not be physiologically important. Probably plays a role in initiation of 16S rRNA degradation (leading to ribosome degradation) during starvation. This is Ribonuclease PH from Mesorhizobium japonicum (strain LMG 29417 / CECT 9101 / MAFF 303099) (Mesorhizobium loti (strain MAFF 303099)).